A 110-amino-acid polypeptide reads, in one-letter code: UPF0367 protein sync_2587 (110 aa).

It belongs to the UPF0367 family.

This is UPF0367 protein sync_2587 from Synechococcus sp. (strain CC9311).